Reading from the N-terminus, the 249-residue chain is Deoxyribose-phosphate aldolase (249 aa).

Asp-94 (proton donor/acceptor) is an active-site residue. Lys-158 functions as the Schiff-base intermediate with acetaldehyde in the catalytic mechanism. The Proton donor/acceptor role is filled by Lys-200.

It belongs to the DeoC/FbaB aldolase family. DeoC type 1 subfamily.

The protein localises to the cytoplasm. It carries out the reaction 2-deoxy-D-ribose 5-phosphate = D-glyceraldehyde 3-phosphate + acetaldehyde. Its pathway is carbohydrate degradation; 2-deoxy-D-ribose 1-phosphate degradation; D-glyceraldehyde 3-phosphate and acetaldehyde from 2-deoxy-alpha-D-ribose 1-phosphate: step 2/2. In terms of biological role, catalyzes a reversible aldol reaction between acetaldehyde and D-glyceraldehyde 3-phosphate to generate 2-deoxy-D-ribose 5-phosphate. In Thermoplasma volcanium (strain ATCC 51530 / DSM 4299 / JCM 9571 / NBRC 15438 / GSS1), this protein is Deoxyribose-phosphate aldolase.